The primary structure comprises 84 residues: Putative movement protein (84 aa).

The helical transmembrane segment at 15 to 35 threads the bilayer; sequence ALHGILVAFIAVLCLIGCLWA.

As to quaternary structure, interacts with the capsid protein (CP). Part of a MP-CP-viral DNA complex.

The protein resides in the host membrane. Functionally, involved in the viral transport within, and between cells. This Miscanthus streak virus (isolate 91) (MiSV) protein is Putative movement protein.